A 335-amino-acid polypeptide reads, in one-letter code: 2-keto-3-deoxygluconate permease (335 aa).

Transmembrane regions (helical) follow at residues Ile-10–Pro-30, Gly-42–Ile-62, Leu-77–Pro-97, Gly-100–Met-120, Ala-141–Ala-161, Leu-163–Ala-183, Gln-200–Leu-220, Leu-224–Ala-244, Thr-254–Ala-274, and Ala-289–Tyr-309.

This sequence belongs to the KdgT transporter family.

It localises to the cell inner membrane. It catalyses the reaction 2-dehydro-3-deoxy-D-gluconate(in) + H(+)(in) = 2-dehydro-3-deoxy-D-gluconate(out) + H(+)(out). Catalyzes the proton-dependent uptake of 2-keto-3-deoxygluconate (KDG) into the cell. In Tolumonas auensis (strain DSM 9187 / NBRC 110442 / TA 4), this protein is 2-keto-3-deoxygluconate permease.